Reading from the N-terminus, the 542-residue chain is Putative cysteine ligase BshC (542 aa).

The stretch at 458–487 (VAKNAAIIQAQIEFLQQTLERALLSKHEVE) forms a coiled coil.

It belongs to the BshC family.

Its function is as follows. Involved in bacillithiol (BSH) biosynthesis. May catalyze the last step of the pathway, the addition of cysteine to glucosamine malate (GlcN-Mal) to generate BSH. This Geobacillus thermodenitrificans (strain NG80-2) protein is Putative cysteine ligase BshC.